A 649-amino-acid polypeptide reads, in one-letter code: DNA topoisomerase 3 (649 aa).

The 134-residue stretch at 1-134 folds into the Toprim domain; the sequence is MRLFIAEKPS…KRQQVRRCLI (134 aa). Residues Glu7, Asp103, and Asp105 each contribute to the Mg(2+) site. In terms of domain architecture, Topo IA-type catalytic spans 155–603; sequence FVPLCVSALA…PLVGTLYQLI (449 aa). The interval 194 to 199 is interaction with DNA; the sequence is SVGRVQ. The active-site O-(5'-phospho-DNA)-tyrosine intermediate is the Tyr328. A disordered region spans residues 614–649; it reads FRGIVAPGGGDKKKSAPRKRAGKKSPPAAETGRQTE.

The protein belongs to the type IA topoisomerase family. It depends on Mg(2+) as a cofactor.

It catalyses the reaction ATP-independent breakage of single-stranded DNA, followed by passage and rejoining.. Functionally, releases the supercoiling and torsional tension of DNA, which is introduced during the DNA replication and transcription, by transiently cleaving and rejoining one strand of the DNA duplex. Introduces a single-strand break via transesterification at a target site in duplex DNA. The scissile phosphodiester is attacked by the catalytic tyrosine of the enzyme, resulting in the formation of a DNA-(5'-phosphotyrosyl)-enzyme intermediate and the expulsion of a 3'-OH DNA strand. The free DNA strand then undergoes passage around the unbroken strand, thus removing DNA supercoils. Finally, in the religation step, the DNA 3'-OH attacks the covalent intermediate to expel the active-site tyrosine and restore the DNA phosphodiester backbone. The protein is DNA topoisomerase 3 of Salmonella typhimurium (strain LT2 / SGSC1412 / ATCC 700720).